The sequence spans 162 residues: ATP-dependent Clp protease adapter protein CLPS1, chloroplastic (162 aa).

The N-terminal 58 residues, 1-58 (MAASCLRPAPTASAQMMTRSPVAGLPRPCSALQRSGCTLQGAFGTFAPQTTRTFVVTW), are a transit peptide targeting the chloroplast.

Belongs to the ClpS family.

It localises to the plastid. The protein resides in the chloroplast stroma. Small adapter protein that modulate the activity of plastid Clp protease system (CLPC). Probably involved in substrate selection for plastid CLPC. The chain is ATP-dependent Clp protease adapter protein CLPS1, chloroplastic from Chlamydomonas reinhardtii (Chlamydomonas smithii).